A 183-amino-acid chain; its full sequence is Small ribosomal subunit protein bS20c (183 aa).

The transit peptide at 1–68 (MAAISMACVS…FQRRGFSVVC (68 aa)) directs the protein to the chloroplast. Positions 79-99 (AAKRTRQAETRRLRNKARKSE) are disordered.

Component of the chloroplast small ribosomal subunit (SSU). Mature 70S chloroplast ribosomes of higher plants consist of a small (30S) and a large (50S) subunit. The 30S small subunit contains 1 molecule of ribosomal RNA (16S rRNA) and 24 different proteins. The 50S large subunit contains 3 rRNA molecules (23S, 5S and 4.5S rRNA) and 33 different proteins.

It is found in the plastid. It localises to the chloroplast. In terms of biological role, component of the chloroplast ribosome (chloro-ribosome), a dedicated translation machinery responsible for the synthesis of chloroplast genome-encoded proteins, including proteins of the transcription and translation machinery and components of the photosynthetic apparatus. This Spinacia oleracea (Spinach) protein is Small ribosomal subunit protein bS20c (RPS20).